The following is an 896-amino-acid chain: Protein bride of sevenless (896 aa).

The first 31 residues, Met-1–Glu-31, serve as a signal peptide directing secretion. Topologically, residues Cys-32–Trp-530 are extracellular. The disordered stretch occupies residues Thr-38 to Val-84. Positions Pro-52–Ile-64 are enriched in polar residues. Over residues Thr-65–Val-84 the composition is skewed to low complexity. N-linked (GlcNAc...) asparagine glycosylation is found at Asn-183, Asn-307, Asn-474, and Asn-485. The next 7 helical transmembrane spans lie at Val-531 to Val-554, Ile-570 to Ile-588, Val-615 to Ala-637, Ala-655 to Met-676, Trp-693 to Ile-712, Ile-728 to Phe-748, and Leu-759 to Val-781. Residues Arg-782–Phe-896 are Cytoplasmic-facing. Disordered regions lie at residues Ser-825–Gly-844 and Ala-861–Phe-896. Low complexity predominate over residues Gln-874 to Leu-884.

This sequence belongs to the G-protein coupled receptor 3 family. As to expression, expressed exclusively by R8 photoreceptor cells and is internalized in a sev-dependent manner by R7 cells.

It is found in the cell membrane. Acts as a ligand for sevenless tyrosine-kinase receptor during eye development. This is Protein bride of sevenless (boss) from Drosophila melanogaster (Fruit fly).